The following is a 205-amino-acid chain: ATP phosphoribosyltransferase (205 aa).

This sequence belongs to the ATP phosphoribosyltransferase family. Short subfamily.

Its subcellular location is the cytoplasm. The catalysed reaction is 1-(5-phospho-beta-D-ribosyl)-ATP + diphosphate = 5-phospho-alpha-D-ribose 1-diphosphate + ATP. It participates in amino-acid biosynthesis; L-histidine biosynthesis; L-histidine from 5-phospho-alpha-D-ribose 1-diphosphate: step 1/9. In terms of biological role, catalyzes the condensation of ATP and 5-phosphoribose 1-diphosphate to form N'-(5'-phosphoribosyl)-ATP (PR-ATP). Has a crucial role in the pathway because the rate of histidine biosynthesis seems to be controlled primarily by regulation of HisG enzymatic activity. This Thermococcus gammatolerans (strain DSM 15229 / JCM 11827 / EJ3) protein is ATP phosphoribosyltransferase.